The following is a 117-amino-acid chain: Immunoglobulin heavy variable 5-10-1 (117 aa).

The N-terminal stretch at 1-19 is a signal peptide; that stretch reads MGSTAILALLLAVLQGVCA. Positions 20 to 44 are framework-1; it reads EVQLVQSGAEVKKPGESLRISCKGS. Residues 20-117 enclose the Ig-like domain; the sequence is EVQLVQSGAE…SDTAMYYCAR (98 aa). Cys-41 and Cys-115 are disulfide-bonded. Positions 45–52 are complementarity-determining-1; the sequence is GYSFTSYW. Residues 53–69 are framework-2; that stretch reads ISWVRQMPGKGLEWMGR. A complementarity-determining-2 region spans residues 70-77; sequence IDPSDSYT. The tract at residues 78–115 is framework-3; the sequence is NYSPSFQGHVTISADKSISTAYLQWSSLKASDTAMYYC. A complementarity-determining-3 region spans residues 116–117; sequence AR.

As to quaternary structure, immunoglobulins are composed of two identical heavy chains and two identical light chains; disulfide-linked.

It is found in the secreted. Its subcellular location is the cell membrane. Functionally, v region of the variable domain of immunoglobulin heavy chains that participates in the antigen recognition. Immunoglobulins, also known as antibodies, are membrane-bound or secreted glycoproteins produced by B lymphocytes. In the recognition phase of humoral immunity, the membrane-bound immunoglobulins serve as receptors which, upon binding of a specific antigen, trigger the clonal expansion and differentiation of B lymphocytes into immunoglobulins-secreting plasma cells. Secreted immunoglobulins mediate the effector phase of humoral immunity, which results in the elimination of bound antigens. The antigen binding site is formed by the variable domain of one heavy chain, together with that of its associated light chain. Thus, each immunoglobulin has two antigen binding sites with remarkable affinity for a particular antigen. The variable domains are assembled by a process called V-(D)-J rearrangement and can then be subjected to somatic hypermutations which, after exposure to antigen and selection, allow affinity maturation for a particular antigen. In Homo sapiens (Human), this protein is Immunoglobulin heavy variable 5-10-1.